The primary structure comprises 262 residues: uncharacterized protein (262 aa).

The chain crosses the membrane as a helical span at residues 13–35 (VVGALLTVVVIVTAAGIIYVISH).

The protein localises to the membrane. This is an uncharacterized protein from Archaeoglobus fulgidus (strain ATCC 49558 / DSM 4304 / JCM 9628 / NBRC 100126 / VC-16).